Consider the following 353-residue polypeptide: D-alanine--D-alanine ligase A (353 aa).

The 206-residue stretch at 141–346 (KRLVNEAGLS…YPEIINRLVA (206 aa)) folds into the ATP-grasp domain. An ATP-binding site is contributed by 169–224 (EQALGLPIFIKPARQGSSVGVHKVVTEADYQAAMSDGFIYDDKLLAEEFIQAREVE). The Mg(2+) site is built by D300, E313, and N315.

The protein belongs to the D-alanine--D-alanine ligase family. The cofactor is Mg(2+). Mn(2+) is required as a cofactor.

It localises to the cytoplasm. It carries out the reaction 2 D-alanine + ATP = D-alanyl-D-alanine + ADP + phosphate + H(+). It functions in the pathway cell wall biogenesis; peptidoglycan biosynthesis. Cell wall formation. This chain is D-alanine--D-alanine ligase A, found in Brucella melitensis biotype 1 (strain ATCC 23456 / CCUG 17765 / NCTC 10094 / 16M).